The sequence spans 373 residues: XK-related protein 9 (373 aa).

The next 8 helical transmembrane spans lie at 8–28, 38–58, 166–186, 203–223, 224–244, 256–276, 295–315, and 318–338; these read FMMS…DIWV, YVFS…AQCF, AAIM…QVAL, ITYL…VVLL, LFLN…LGII, CISM…FTFF, VLGT…IFNP, and FIPI…FLIV.

Belongs to the XK family. Post-translationally, undergoes proteolytic processing by caspase-3 (CASP3), caspase-6 (CASP6) and caspase-7 (CASP7) to generate the XK-related protein 9, processed form, leading to its activation.

The protein localises to the cell membrane. The catalysed reaction is a 1,2-diacyl-sn-glycero-3-phospho-L-serine(in) = a 1,2-diacyl-sn-glycero-3-phospho-L-serine(out). With respect to regulation, activated upon caspase cleavage to generate the XK-related protein 9, processed form. Does not act prior the onset of apoptosis. Phospholipid scramblase that promotes phosphatidylserine exposure on apoptotic cell surface. Phosphatidylserine is a specific marker only present at the surface of apoptotic cells and acts as a specific signal for engulfment. This is XK-related protein 9 from Pan troglodytes (Chimpanzee).